Here is a 235-residue protein sequence, read N- to C-terminus: Peroxynitrite isomerase 2 (235 aa).

The short motif at 82–88 (GVWRGEG) is the GXWXGXG element. Heme b contacts are provided by Lys-198 and His-225.

This sequence belongs to the nitrobindin family. In terms of assembly, homodimer. Heme b is required as a cofactor.

The catalysed reaction is peroxynitrite = nitrate. It functions in the pathway nitrogen metabolism. Its function is as follows. Heme-binding protein able to scavenge peroxynitrite and to protect free L-tyrosine against peroxynitrite-mediated nitration, by acting as a peroxynitrite isomerase that converts peroxynitrite to nitrate. Therefore, this protein likely plays a role in peroxynitrite sensing and in the detoxification of reactive nitrogen and oxygen species (RNS and ROS, respectively). Is able to bind nitric oxide (NO) in vitro, but may act as a sensor of peroxynitrite levels in vivo. This chain is Peroxynitrite isomerase 2, found in Mycolicibacterium paratuberculosis (strain ATCC BAA-968 / K-10) (Mycobacterium paratuberculosis).